Consider the following 428-residue polypeptide: GTPase Obg (428 aa).

Residues M1 to L158 enclose the Obg domain. Residues K118–P145 are disordered. The 171-residue stretch at A159–E329 folds into the OBG-type G domain. GTP-binding positions include G165–S172, F190–V194, D212–G215, N282–D285, and S310–I312. Mg(2+) contacts are provided by S172 and T192. The 79-residue stretch at R350–D428 folds into the OCT domain.

The protein belongs to the TRAFAC class OBG-HflX-like GTPase superfamily. OBG GTPase family. As to quaternary structure, monomer. It depends on Mg(2+) as a cofactor.

Its subcellular location is the cytoplasm. Functionally, an essential GTPase which binds GTP, GDP and possibly (p)ppGpp with moderate affinity, with high nucleotide exchange rates and a fairly low GTP hydrolysis rate. Plays a role in control of the cell cycle, stress response, ribosome biogenesis and in those bacteria that undergo differentiation, in morphogenesis control. This chain is GTPase Obg, found in Bacillus pumilus (strain SAFR-032).